Reading from the N-terminus, the 492-residue chain is 56 kDa U1 small nuclear ribonucleoprotein component (492 aa).

Residues Met-1–Pro-15 are compositionally biased toward basic residues. Disordered stretches follow at residues Met-1–Lys-35 and Asp-300–Gly-371. Residues Gln-18–Asp-30 show a composition bias toward polar residues. Residues Ser-310–Ser-321 show a composition bias toward low complexity. A compositionally biased stretch (polar residues) spans Thr-329–His-353.

In terms of assembly, component of the 18S U1 snRNP particle, a subcomplex of the spliceosome. Interacts with the nuclear cap-binding complex CBC1-CBC2 (yCBC). Directly contacts intronic sequences of substrate pre-RNA.

The protein resides in the nucleus. In terms of biological role, component of the U1 snRNP particle, which recognizes and binds the 5'-splice site of pre-mRNA. Together with other non-snRNP factors, U1 snRNP forms the spliceosomal commitment complex, that targets pre-mRNA to the splicing pathway. The chain is 56 kDa U1 small nuclear ribonucleoprotein component (SNU56) from Saccharomyces cerevisiae (strain ATCC 204508 / S288c) (Baker's yeast).